The chain runs to 394 residues: Phosphoglycerate kinase (394 aa).

Substrate-binding positions include 21-23 (DFN), Arg-36, 59-62 (HLGR), Arg-118, and Arg-151. Ser-183 carries the post-translational modification Phosphoserine. ATP-binding residues include Lys-201 and Gly-292. The residue at position 299 (Thr-299) is a Phosphothreonine. Residues Glu-323 and 350-353 (GGDS) each bind ATP.

It belongs to the phosphoglycerate kinase family. As to quaternary structure, monomer.

It localises to the cytoplasm. It carries out the reaction (2R)-3-phosphoglycerate + ATP = (2R)-3-phospho-glyceroyl phosphate + ADP. It functions in the pathway carbohydrate degradation; glycolysis; pyruvate from D-glyceraldehyde 3-phosphate: step 2/5. The protein is Phosphoglycerate kinase of Bacillus mycoides (strain KBAB4) (Bacillus weihenstephanensis).